A 427-amino-acid polypeptide reads, in one-letter code: Adenylosuccinate synthetase (427 aa).

GTP-binding positions include 12–18 (GDEGKGK) and 40–42 (GHT). The active-site Proton acceptor is D13. Mg(2+)-binding residues include D13 and G40. IMP-binding positions include 13–16 (DEGK), 38–41 (NAGH), T128, R142, Q223, T238, and R302. The Proton donor role is filled by H41. Position 298–304 (298–304 (TTTGRNR)) interacts with substrate. Residues R304, 330–332 (KLD), and 412–414 (GVG) each bind GTP.

The protein belongs to the adenylosuccinate synthetase family. Homodimer. Mg(2+) serves as cofactor.

It is found in the cytoplasm. It carries out the reaction IMP + L-aspartate + GTP = N(6)-(1,2-dicarboxyethyl)-AMP + GDP + phosphate + 2 H(+). It functions in the pathway purine metabolism; AMP biosynthesis via de novo pathway; AMP from IMP: step 1/2. Plays an important role in the de novo pathway of purine nucleotide biosynthesis. Catalyzes the first committed step in the biosynthesis of AMP from IMP. This chain is Adenylosuccinate synthetase, found in Thermobifida fusca (strain YX).